Here is a 310-residue protein sequence, read N- to C-terminus: Cytochrome f (310 aa).

Positions 1 to 27 (MRRHLSLFLGSLVIGLALLIAPAASWA) are cleaved as a signal peptide. Positions 28, 48, 51, and 52 each coordinate heme. A helical transmembrane segment spans residues 277–297 (IYGLLAFFAAVALAQIMLVLK).

Belongs to the cytochrome f family. As to quaternary structure, the 4 large subunits of the cytochrome b6-f complex are cytochrome b6, subunit IV (17 kDa polypeptide, PetD), cytochrome f and the Rieske protein, while the 4 small subunits are PetG, PetL, PetM and PetN. The complex functions as a dimer. The cofactor is heme.

Its subcellular location is the cellular thylakoid membrane. Functionally, component of the cytochrome b6-f complex, which mediates electron transfer between photosystem II (PSII) and photosystem I (PSI), cyclic electron flow around PSI, and state transitions. The sequence is that of Cytochrome f from Synechococcus sp. (strain CC9605).